We begin with the raw amino-acid sequence, 262 residues long: 27 kDa lipoprotein antigen (262 aa).

The first 28 residues, 1–28 (MSASCAVPRLTRFAVFAVAGATALSLSA), serve as a signal peptide directing secretion. Low complexity-rich tracts occupy residues 28-57 (ACGSSNKSSSTSTSTSTSTSTVTSAAPSST) and 148-158 (STPGGASSTPP). 2 disordered regions span residues 28–60 (ACGSSNKSSSTSTSTSTSTSTVTSAAPSSTPNA) and 138–171 (VNGTCPKPHESTPGGASSTPPSGSPSPAPAKPAW). C29 is lipidated: N-palmitoyl cysteine. Residue C29 is the site of S-diacylglycerol cysteine attachment.

Its subcellular location is the cell membrane. This is 27 kDa lipoprotein antigen (Mi43) from Mycobacterium intracellulare.